A 117-amino-acid polypeptide reads, in one-letter code: Nascent polypeptide-associated complex protein (117 aa).

One can recognise an NAC-A/B domain in the interval 9–77 (PKQLKQMQRA…ARERSLEAEM (69 aa)).

It belongs to the NAC-alpha family. Homodimer. Interacts with the ribosome. Binds ribosomal RNA.

Contacts the emerging nascent chain on the ribosome. The polypeptide is Nascent polypeptide-associated complex protein (Methanothermobacter thermautotrophicus (strain ATCC 29096 / DSM 1053 / JCM 10044 / NBRC 100330 / Delta H) (Methanobacterium thermoautotrophicum)).